The sequence spans 673 residues: Protein-arginine deiminase type-2 (673 aa).

Residue Met1 is modified to N-acetylmethionine. 12 residues coordinate Ca(2+): Asp131, Asp133, Asp135, Glu139, Asn162, Asp164, Asp166, Asp174, Asp177, Lys179, Asp185, and Asp188. Citrulline is present on Arg352. Ca(2+) is bound by residues Glu362, Asp397, Phe416, Leu419, and Glu420. Cys655 serves as the catalytic Nucleophile.

This sequence belongs to the protein arginine deiminase family. Homodimer. Ca(2+) is required as a cofactor. In terms of tissue distribution, expressed in various tissues including muscle, uterus, spinal cord, salivary gland and pancreas.

The protein localises to the cytoplasm. The enzyme catalyses L-arginyl-[protein] + H2O = L-citrullyl-[protein] + NH4(+). Its function is as follows. Catalyzes the deimination of arginine residues of proteins. The polypeptide is Protein-arginine deiminase type-2 (Padi2) (Mus musculus (Mouse)).